The following is a 66-amino-acid chain: Ocellatin-PT5 (66 aa).

A signal peptide spans 1–22 (MAFLKKSLFLVLFLGLVSLSIC). A propeptide spanning residues 23 to 39 (DEEKRQDEDDDDDDDEE) is cleaved from the precursor. Position 66 is a valine amide (V66).

Expressed by the skin glands.

Its subcellular location is the secreted. Has antibacterial activity against Gram-negative bacterium E.coli ATCC 25922 (MIC=300 uM) but not against S.pneumoniae ATCC 700603, S.choleraesuis ATCC 14028 or Gram-positive bacterium S.aureus ATCC 29313. Shows very little hemolytic activity and no cytotoxicity. The chain is Ocellatin-PT5 from Leptodactylus pustulatus (Ceara white-lipped frog).